Consider the following 121-residue polypeptide: Cell division protein FtsL (121 aa).

At 1 to 34 (MISRVTEALSKVKGSIGSNERHALPGVIGDDLLR) the chain is on the cytoplasmic side. The helical transmembrane segment at 35-57 (FGKLPLCLFICIILTAVTVVTTA) threads the bilayer. Residues 58–121 (HHTRLLTAQR…PSQENIVVQK (64 aa)) are Periplasmic-facing.

Belongs to the FtsL family. As to quaternary structure, part of a complex composed of FtsB, FtsL and FtsQ.

The protein localises to the cell inner membrane. Its function is as follows. Essential cell division protein. May link together the upstream cell division proteins, which are predominantly cytoplasmic, with the downstream cell division proteins, which are predominantly periplasmic. This is Cell division protein FtsL from Salmonella typhimurium (strain LT2 / SGSC1412 / ATCC 700720).